A 507-amino-acid polypeptide reads, in one-letter code: ATP synthase subunit alpha, chloroplastic (507 aa).

170–177 serves as a coordination point for ATP; it reads GDRQTGKT.

This sequence belongs to the ATPase alpha/beta chains family. As to quaternary structure, F-type ATPases have 2 components, CF(1) - the catalytic core - and CF(0) - the membrane proton channel. CF(1) has five subunits: alpha(3), beta(3), gamma(1), delta(1), epsilon(1). CF(0) has four main subunits: a, b, b' and c.

It is found in the plastid. The protein localises to the chloroplast thylakoid membrane. The enzyme catalyses ATP + H2O + 4 H(+)(in) = ADP + phosphate + 5 H(+)(out). Functionally, produces ATP from ADP in the presence of a proton gradient across the membrane. The alpha chain is a regulatory subunit. The sequence is that of ATP synthase subunit alpha, chloroplastic from Cycas taitungensis (Prince sago).